A 458-amino-acid polypeptide reads, in one-letter code: Purple acid phosphatase 23 (458 aa).

The signal sequence occupies residues 1-19 (MTLLIMITLTSISLLLAAA). N-linked (GlcNAc...) asparagine glycans are attached at residues Asn59, Asn121, and Asn136. Residue Asp194 participates in Fe cation binding. A glycan (N-linked (GlcNAc...) asparagine) is linked at Asn200. Fe cation is bound by residues Asp221 and Tyr224. Residue Asp221 coordinates Mn(2+). Asn278 lines the Mn(2+) pocket. Asn278 contacts substrate. Asn331 carries an N-linked (GlcNAc...) asparagine glycan. His360 provides a ligand contact to Mn(2+). The active-site Proton donor is His370. His397 provides a ligand contact to Mn(2+). 397 to 399 (HVH) contacts substrate. His399 lines the Fe cation pocket. Residues Asn409 and Asn455 are each glycosylated (N-linked (GlcNAc...) asparagine).

This sequence belongs to the metallophosphoesterase superfamily. Purple acid phosphatase family. Homodimer. Fe cation is required as a cofactor. It depends on Mn(2+) as a cofactor. In terms of tissue distribution, specifically expressed in flowers.

It localises to the secreted. It carries out the reaction a phosphate monoester + H2O = an alcohol + phosphate. Functionally, acid phosphatase activity with ATP, ADP, dATP, pyrophosphate, polyphosphate, phosphoserine and phosphothreonine. Low or no activity with phosphotyrosine, AMP and phytate. The chain is Purple acid phosphatase 23 (PAP23) from Arabidopsis thaliana (Mouse-ear cress).